We begin with the raw amino-acid sequence, 141 residues long: MMGFVKKIRDFFDLDEEKWEEDEYEQEEVAQQPKVEQKQNVVSLQSVQKSSKLVLFEPRAYAEVQEIADHLKNRRAVVVNVHRVDRDQARRIVDFLSGTVYAIGGDIQQVGSTIFLCTPDNVDVSGSISIVSDDEPTIKRW.

It belongs to the SepF family. As to quaternary structure, homodimer. Interacts with FtsZ.

It localises to the cytoplasm. Cell division protein that is part of the divisome complex and is recruited early to the Z-ring. Probably stimulates Z-ring formation, perhaps through the cross-linking of FtsZ protofilaments. Its function overlaps with FtsA. The sequence is that of Cell division protein SepF from Anoxybacillus flavithermus (strain DSM 21510 / WK1).